We begin with the raw amino-acid sequence, 251 residues long: uncharacterized protein (251 aa).

Positions 4–152 (IEITKDNIED…YFQLMALTWN (149 aa)) constitute an N-acetyltransferase domain.

This sequence belongs to the acetyltransferase family.

This is an uncharacterized protein from Bacillus subtilis (strain 168).